The chain runs to 302 residues: MEAIPVLAGPTGSGKTFLALRLGEEVPVEVVSADATMVYRGLDIGTDKPTPEERARVPHHLVDVLEPHEAMSVARFLALAEEAIAHVLSRGKLPLVVGGTGYYIRALSEGLHDLPPPDPGVQEALWAELEARGLEALLAELARASPEDARRVGKNPRRLVRALEVLRRTGTPPARFPKRPPRFRYKKLVLWPDRAWLFPRLEERAKAQFARGLVEEVRGLLERYPRMPTALQAIGYKEVAGHLLGAYGLEEALERDIRAVKAYAKRQYTWFRHEPGDVVYLPRGGEEAYVGFRDWLRLHFGL.

Position 9 to 16 (9 to 16 (GPTGSGKT)) interacts with ATP. 11–16 (TGSGKT) is a binding site for substrate.

It belongs to the IPP transferase family. In terms of assembly, monomer. The cofactor is Mg(2+).

The enzyme catalyses adenosine(37) in tRNA + dimethylallyl diphosphate = N(6)-dimethylallyladenosine(37) in tRNA + diphosphate. Its function is as follows. Catalyzes the transfer of a dimethylallyl group onto the adenine at position 37 in tRNAs that read codons beginning with uridine, leading to the formation of N6-(dimethylallyl)adenosine (i(6)A). The polypeptide is tRNA dimethylallyltransferase (Thermus thermophilus (strain ATCC BAA-163 / DSM 7039 / HB27)).